We begin with the raw amino-acid sequence, 315 residues long: MIVAPVVLSIFLQLFVQAAQPWKALDPEQALYVYKRCYEDHLPAGSSRVTYLKSWNAWKLEPNDAVTHCYAKCVLIGLQLYEEKDKAFKSERIPVQHEAYKTLNEANSREVTEYQQALASINAGDGSCVALYNAYLPVHNKFVDLSRKLYHGTVEGAAKIYAAMPQIKQKGESFFAYCAKKIWGGYNKKEWKRGRNYELSGSSQFKKVIDCIFRGLRYMDDSGLKVDEVVRDFNLINKSDLEPEVRSVLASCTGTQAYDYYSCLLNSPVKEDFKNAFDFHELRSADYAFLLRGKVYEGPEQVKEEMKHLNTTVHF.

The signal sequence occupies residues 1 to 18; the sequence is MIVAPVVLSIFLQLFVQA. Cystine bridges form between cysteine 37–cysteine 73, cysteine 69–cysteine 128, cysteine 178–cysteine 211, and cysteine 252–cysteine 263.

It belongs to the PBP/GOBP family. As to quaternary structure, interacts with host coagulation factor XII/F12 (inactive and activated). Interacts with host coagulation factor XI/F11 (inactive).

Its subcellular location is the secreted. In terms of biological role, modulates blood feeding of female mosquitoes on vertebrate species by binding and sequestering different mediators involved in the host response. Binds leukotriene B4 and leukotriene D4. Exhibits anticoagulant activity targeting the intrinsic coagulation pathway; binds coagulation factors XII and XI, preventing generation of activated FXIIa and FXIa. This is Long form salivary protein D7L2 from Anopheles gambiae (African malaria mosquito).